A 336-amino-acid chain; its full sequence is Nuclear egress protein 2 (336 aa).

Over 1–315 (MASPEERLLD…AWRYSWRATP (315 aa)) the chain is Perinuclear space. 2 disordered regions span residues 193–221 (RSGQ…GCLG) and 277–297 (RTRE…VPPE). The span at 277 to 288 (RTRETRRMRGSH) shows a compositional bias: basic residues. Residues 316–333 (YLARVLAVTAVALLLMFL) form a helical membrane-spanning segment. The Nuclear segment spans residues 334–336 (RWT).

Belongs to the herpesviridae NEC2 protein family. As to quaternary structure, forms a heterodimeric viral nuclear egress complex (NEC) with NEC1. Interacts with host IKBKE; this interaction inhibits host IKBKE kinase activity and IRF3 nuclear translocation. Phosphorylated.

It localises to the host nucleus inner membrane. It is found in the host cytoplasm. The protein localises to the host perinuclear region. In terms of biological role, plays an essential role in virion nuclear egress, the first step of virion release from infected cell. Within the host nucleus, NEC1 interacts with the newly formed capsid through the vertexes and directs it to the inner nuclear membrane by associating with NEC2. Induces the budding of the capsid at the inner nuclear membrane as well as its envelopment into the perinuclear space. There, the NEC1/NEC2 complex promotes the fusion of the enveloped capsid with the outer nuclear membrane and the subsequent release of the viral capsid into the cytoplasm where it will reach the secondary budding sites in the host Golgi or trans-Golgi network. Inhibits host IKBKE and IRF3, thereby impairing type I IFN signaling. This chain is Nuclear egress protein 2, found in Homo sapiens (Human).